Here is a 1188-residue protein sequence, read N- to C-terminus: DNA-directed RNA polymerase subunit beta (1188 aa).

The protein belongs to the RNA polymerase beta chain family. The RNAP catalytic core consists of 2 alpha, 1 beta, 1 beta' and 1 omega subunit. When a sigma factor is associated with the core the holoenzyme is formed, which can initiate transcription.

The catalysed reaction is RNA(n) + a ribonucleoside 5'-triphosphate = RNA(n+1) + diphosphate. Functionally, DNA-dependent RNA polymerase catalyzes the transcription of DNA into RNA using the four ribonucleoside triphosphates as substrates. The sequence is that of DNA-directed RNA polymerase subunit beta from Streptococcus equi subsp. zooepidemicus (strain H70).